A 122-amino-acid chain; its full sequence is Selenoprotein H (122 aa).

The residue at position 20 (K20) is an N6-acetyllysine. The segment at residues 41 to 44 is a cross-link (cysteinyl-selenocysteine (Cys-Sec); redox-active); the sequence is CTSU. A non-standard amino acid (selenocysteine) is located at residue U44.

This sequence belongs to the SelWTH family.

Its function is as follows. May be involved in a redox-related process. The chain is Selenoprotein H from Macaca fascicularis (Crab-eating macaque).